A 196-amino-acid polypeptide reads, in one-letter code: TGEKPFTCKECGKGFTQKRNLASHMTIHTGEKPFSCTECGKGFTQKRNLASHLTIHTGEKPFPCTECGKGFTQKSNLVSHMKIHTGEKPFTCTECGKEFAHKHRLLGHLKIHTGEKPFSCTECGKHFAHKYHLVSHMKIHTREKPFTCTECGEHFANKVSLLGHLKMHKGEKPFTCTECGNSFTQVSSLVSHMKIH.

C2H2-type zinc fingers lie at residues F6–H28, F34–H56, F62–H84, F90–H112, F118–H140, F146–H168, and F174–H196.

It belongs to the krueppel C2H2-type zinc-finger protein family.

The protein resides in the nucleus. May be involved in transcriptional regulation. In Xenopus laevis (African clawed frog), this protein is Gastrula zinc finger protein XlCGF8.2DB.